A 367-amino-acid chain; its full sequence is Anhydro-N-acetylmuramic acid kinase (367 aa).

ATP is bound at residue 13-20 (GTSMDGAD).

It belongs to the anhydro-N-acetylmuramic acid kinase family.

It carries out the reaction 1,6-anhydro-N-acetyl-beta-muramate + ATP + H2O = N-acetyl-D-muramate 6-phosphate + ADP + H(+). It functions in the pathway amino-sugar metabolism; 1,6-anhydro-N-acetylmuramate degradation. The protein operates within cell wall biogenesis; peptidoglycan recycling. Its function is as follows. Catalyzes the specific phosphorylation of 1,6-anhydro-N-acetylmuramic acid (anhMurNAc) with the simultaneous cleavage of the 1,6-anhydro ring, generating MurNAc-6-P. Is required for the utilization of anhMurNAc either imported from the medium or derived from its own cell wall murein, and thus plays a role in cell wall recycling. In Neisseria meningitidis serogroup C / serotype 2a (strain ATCC 700532 / DSM 15464 / FAM18), this protein is Anhydro-N-acetylmuramic acid kinase.